The following is a 179-amino-acid chain: 6,7-dimethyl-8-ribityllumazine synthase (179 aa).

5-amino-6-(D-ribitylamino)uracil-binding positions include Trp-13, 45–47, and 68–70; these read AVE and VVI. Residue 73 to 74 participates in (2S)-2-hydroxy-3-oxobutyl phosphate binding; the sequence is DT. His-76 (proton donor) is an active-site residue. Phe-101 contributes to the 5-amino-6-(D-ribitylamino)uracil binding site. Residue Arg-115 participates in (2S)-2-hydroxy-3-oxobutyl phosphate binding. The disordered stretch occupies residues 157–179; it reads AKAAKKPAKAAAKTQKKKKKVRK.

This sequence belongs to the DMRL synthase family.

The enzyme catalyses (2S)-2-hydroxy-3-oxobutyl phosphate + 5-amino-6-(D-ribitylamino)uracil = 6,7-dimethyl-8-(1-D-ribityl)lumazine + phosphate + 2 H2O + H(+). Its pathway is cofactor biosynthesis; riboflavin biosynthesis; riboflavin from 2-hydroxy-3-oxobutyl phosphate and 5-amino-6-(D-ribitylamino)uracil: step 1/2. Catalyzes the formation of 6,7-dimethyl-8-ribityllumazine by condensation of 5-amino-6-(D-ribitylamino)uracil with 3,4-dihydroxy-2-butanone 4-phosphate. This is the penultimate step in the biosynthesis of riboflavin. This chain is 6,7-dimethyl-8-ribityllumazine synthase, found in Bdellovibrio bacteriovorus (strain ATCC 15356 / DSM 50701 / NCIMB 9529 / HD100).